The sequence spans 515 residues: Fatty acyl-CoA reductase 1 (515 aa).

Residues 1-465 (MLSIPEFYQG…ARKHLNKLRN (465 aa)) are Cytoplasmic-facing. Residues 466–484 (IRYGFNTILVVLIWRVFIA) form a helical membrane-spanning segment. Topologically, residues 485–515 (RSQMARNIWYFVVSMCFKFLSYFRASSTMRY) are peroxisomal.

It belongs to the fatty acyl-CoA reductase family.

Its subcellular location is the peroxisome membrane. The catalysed reaction is a long-chain fatty acyl-CoA + 2 NADPH + 2 H(+) = a long-chain primary fatty alcohol + 2 NADP(+) + CoA. It catalyses the reaction hexadecanoyl-CoA + 2 NADPH + 2 H(+) = hexadecan-1-ol + 2 NADP(+) + CoA. The enzyme catalyses octadecanoyl-CoA + 2 NADPH + 2 H(+) = octadecan-1-ol + 2 NADP(+) + CoA. It carries out the reaction (9Z)-octadecenoyl-CoA + 2 NADPH + 2 H(+) = (9Z)-octadecen-1-ol + 2 NADP(+) + CoA. The catalysed reaction is (9Z,12Z)-octadecadienoyl-CoA + 2 NADPH + 2 H(+) = (9Z,12Z)-octadecadien-1-ol + 2 NADP(+) + CoA. It catalyses the reaction eicosanoyl-CoA + 2 NADPH + 2 H(+) = eicosan-1-ol + 2 NADP(+) + CoA. The enzyme catalyses 16-methylheptadecanoyl-CoA + 2 NADPH + 2 H(+) = 16-methylheptadecan-1-ol + 2 NADP(+) + CoA. It carries out the reaction 18-methylnonadecanoyl-CoA + 2 NADPH + 2 H(+) = 18-methylnonadecan-1-ol + 2 NADP(+) + CoA. In terms of biological role, catalyzes the reduction of saturated and unsaturated C16 or C18 fatty acyl-CoA to fatty alcohols. It plays an essential role in the production of ether lipids/plasmalogens which synthesis requires fatty alcohols. In parallel, it is also required for wax monoesters production since fatty alcohols also constitute a substrate for their synthesis. In Xenopus laevis (African clawed frog), this protein is Fatty acyl-CoA reductase 1 (far1).